Here is a 388-residue protein sequence, read N- to C-terminus: Ras-related protein Rab-26 (388 aa).

The tract at residues 1–115 (MASTAVGLGG…HHHSQLSLTG (115 aa)) is disordered. Positions 7 to 21 (GLGGGEGDPGAGGPP) are enriched in gly residues. Over residues 47–56 (RIEELRRRPF) the composition is skewed to basic and acidic residues. The span at 67–86 (PASVSASITTTTTQQQQQHH) shows a compositional bias: low complexity. Positions 87 to 109 (NPSHHHQSSHHQPSHHHHHHHHS) are enriched in basic residues. A GTP-binding site is contributed by 197–204 (GDSGVGKT). An Effector region motif is present at residues 219–228 (SFSATVGIAL). Residues 246-250 (DTAGQ) and 304-307 (NKAD) each bind GTP. Cys-382 carries S-palmitoyl cysteine lipidation. Cys-385 carries the post-translational modification Cysteine methyl ester. Residue Cys-385 is the site of S-geranylgeranyl cysteine attachment. A propeptide spans 386 to 388 (RNM) (removed in mature form).

This sequence belongs to the small GTPase superfamily. Rab family.

It localises to the cell membrane. Functionally, participates in exocrine secretion. This Drosophila melanogaster (Fruit fly) protein is Ras-related protein Rab-26.